Reading from the N-terminus, the 92-residue chain is C-C motif chemokine 4 (92 aa).

An N-terminal signal peptide occupies residues 1 to 23 (MKLCVSAFSLLLLVAAFCDSVLS). Disulfide bonds link C34–C58 and C35–C74.

It belongs to the intercrine beta (chemokine CC) family. As to quaternary structure, homodimer.

It localises to the secreted. In terms of biological role, monokine with inflammatory and chemokinetic properties. The protein is C-C motif chemokine 4 (Ccl4) of Rattus norvegicus (Rat).